Reading from the N-terminus, the 322-residue chain is MADVLTELPGVGPSTADKLIEGGYLDFMKIATATIGELTDIEGISEKAAAKMIMAARDLCDLGFKSGVELLKQRQSVWRLSTGSTELGTVLAGGIESQSVTEFAGMFGSGKTQIMHQTCVNLQMREKIFADLEGVVEEELEAPKAVYIDTEGTFRPERVVQMAEGAGIDGQTVLDNTFVARAYNSDMQMLFAEKIEDLIKGGNNIKLVIIDSLTSTFRNEFTGRGKLAERQQKLGRHMATLNKLADLYNCIVLVTNQVAAKPDAYFGVAEQAIGGHVVGHAATFRFFLRKSKGDKRVAKLYDSPHLPDSEAVFRITEKGIQD.

Residue Gly-105–Thr-112 coordinates ATP.

Belongs to the eukaryotic RecA-like protein family.

In terms of biological role, involved in DNA repair and in homologous recombination. Binds and assemble on single-stranded DNA to form a nucleoprotein filament. Hydrolyzes ATP in a ssDNA-dependent manner and promotes DNA strand exchange between homologous DNA molecules. The protein is DNA repair and recombination protein RadA of Methanococcus maripaludis (Methanococcus deltae).